The sequence spans 266 residues: Dihydropteroate synthase (266 aa).

Residues 12–260 (AAIMGILNVT…DVKANQDIVA (249 aa)) enclose the Pterin-binding domain. A Mg(2+)-binding site is contributed by N19. Residues T59, D93, N112, D176, K212, and 248–250 (RVH) contribute to the (7,8-dihydropterin-6-yl)methyl diphosphate site.

The protein belongs to the DHPS family. Homodimer or homotrimer. It depends on Mg(2+) as a cofactor.

The catalysed reaction is (7,8-dihydropterin-6-yl)methyl diphosphate + 4-aminobenzoate = 7,8-dihydropteroate + diphosphate. It functions in the pathway cofactor biosynthesis; tetrahydrofolate biosynthesis; 7,8-dihydrofolate from 2-amino-4-hydroxy-6-hydroxymethyl-7,8-dihydropteridine diphosphate and 4-aminobenzoate: step 1/2. Catalyzes the condensation of para-aminobenzoate (pABA) with 6-hydroxymethyl-7,8-dihydropterin diphosphate (DHPt-PP) to form 7,8-dihydropteroate (H2Pte), the immediate precursor of folate derivatives. The sequence is that of Dihydropteroate synthase (folP) from Streptococcus pyogenes serotype M18 (strain MGAS8232).